A 397-amino-acid polypeptide reads, in one-letter code: Iripin-2 (397 aa).

An N-terminal signal peptide occupies residues 1–21 (MEDFKMKTLAAFLSLLVLCWA). N-linked (GlcNAc...) asparagine glycosylation is found at asparagine 109 and asparagine 270.

Belongs to the serpin family. As to quaternary structure, interacts with mouse MCPT4. In terms of tissue distribution, female salivary gland. Ovary. Midgut.

It localises to the secreted. Functionally, serine protease inhibitor that modulates blood feeding of ticks on vertebrate species. Inhibits host trypsin, thrombin (F2), alpha-chymotrypsin, cathepsin G (CTSG) and mast cell chymase (CMA1). Inhibits host cathepsin G- and thrombin-induced platelet aggregation. Inhibits acute inflammation in the host. Suppresses neutrophil recruitment in inflamed area. Does not inhibit host plasmin (PLG), factor Xa (F10), factor XIa (F11), elastase and proteinase 3/myeloblastin (PRTN3). (Microbial infection) Inhibits IL6 production by mouse splenic dendritic cells in response to Borrelia burgdorferi exposure. Decreases levels of STAT3 phosphorylation in mouse splenic dendritic cells in response to Borrelia burgdorferi exposure and in Borrelia-primed CD4+ T-lymphocytes. Inhibits differentiation of mouse Th17 cells, a subset of CD4+ T-lymphocytes that play a crucial role in protection against extracellular bacteria, in response to Borrelia burgdorferi exposure via inhibition of the IL6/STAT3 signaling pathway. The chain is Iripin-2 from Ixodes ricinus (Common tick).